A 100-amino-acid polypeptide reads, in one-letter code: Large ribosomal subunit protein uL23 (100 aa).

This sequence belongs to the universal ribosomal protein uL23 family. In terms of assembly, part of the 50S ribosomal subunit. Contacts protein L29, and trigger factor when it is bound to the ribosome.

Its function is as follows. One of the early assembly proteins it binds 23S rRNA. One of the proteins that surrounds the polypeptide exit tunnel on the outside of the ribosome. Forms the main docking site for trigger factor binding to the ribosome. This is Large ribosomal subunit protein uL23 from Buchnera aphidicola subsp. Baizongia pistaciae (strain Bp).